The primary structure comprises 228 residues: Protein GrpE (228 aa).

Basic and acidic residues predominate over residues 1 to 22 (MDDKQKTNEEVKASSFDSEKSS). A disordered region spans residues 1–71 (MDDKQKTNEE…DQTNTNNNEL (71 aa)). Over residues 38–53 (QNVQHDNGSNPAQKQN) the composition is skewed to polar residues.

Belongs to the GrpE family. As to quaternary structure, homodimer.

It is found in the cytoplasm. Participates actively in the response to hyperosmotic and heat shock by preventing the aggregation of stress-denatured proteins, in association with DnaK and GrpE. It is the nucleotide exchange factor for DnaK and may function as a thermosensor. Unfolded proteins bind initially to DnaJ; upon interaction with the DnaJ-bound protein, DnaK hydrolyzes its bound ATP, resulting in the formation of a stable complex. GrpE releases ADP from DnaK; ATP binding to DnaK triggers the release of the substrate protein, thus completing the reaction cycle. Several rounds of ATP-dependent interactions between DnaJ, DnaK and GrpE are required for fully efficient folding. The protein is Protein GrpE of Coprothermobacter proteolyticus (strain ATCC 35245 / DSM 5265 / OCM 4 / BT).